The primary structure comprises 238 residues: Triosephosphate isomerase (238 aa).

7-9 (NFK) is a substrate binding site. Residue His-91 is the Electrophile of the active site. The Proton acceptor role is filled by Glu-158. Gly-164 and Ser-200 together coordinate substrate.

It belongs to the triosephosphate isomerase family. As to quaternary structure, homodimer.

It localises to the cytoplasm. The enzyme catalyses D-glyceraldehyde 3-phosphate = dihydroxyacetone phosphate. The protein operates within carbohydrate biosynthesis; gluconeogenesis. It participates in carbohydrate degradation; glycolysis; D-glyceraldehyde 3-phosphate from glycerone phosphate: step 1/1. Functionally, involved in the gluconeogenesis. Catalyzes stereospecifically the conversion of dihydroxyacetone phosphate (DHAP) to D-glyceraldehyde-3-phosphate (G3P). In Ureaplasma parvum serovar 3 (strain ATCC 27815 / 27 / NCTC 11736), this protein is Triosephosphate isomerase.